The sequence spans 261 residues: INTITFDAGNATINKYATFMESLRNEAKDPSLKCYGIPMLPNTNSTIKYLLVKLQGASLKTITLMLRRNNLYVMGYSDPYDNKCRYHIFNDIKGTEYSDVENTLCPSSNPRVAKPINYNGLYPTLEKKAGVTSRNEVQLGIQILSSDIGKISGQGSFTEKIEAKFLLVAIQMVSEAARFKYIENQVKTNFNRDFSPNDKVLDLEENWGKISTAIHNSKNGALPKPLELKNADGTKWIVLRVDEIKPDVGLLNYVNGTCQAT.

2 disulfide bridges follow: cysteine 34/cysteine 258 and cysteine 84/cysteine 105. Residue glutamate 175 is part of the active site.

The protein belongs to the ribosome-inactivating protein family. Type 1 RIP subfamily.

The enzyme catalyses Endohydrolysis of the N-glycosidic bond at one specific adenosine on the 28S rRNA.. Functionally, inhibits viral infection of plants, and protein synthesis in vitro. This Phytolacca americana (American pokeweed) protein is Antiviral protein S.